We begin with the raw amino-acid sequence, 469 residues long: Cysteine--tRNA ligase (469 aa).

C33 contributes to the Zn(2+) binding site. A 'HIGH' region motif is present at residues 35-45 (ATVQGLPHIGH). Positions 211, 236, and 240 each coordinate Zn(2+). The short motif at 267-271 (KMSKS) is the 'KMSKS' region element. ATP is bound at residue K270.

This sequence belongs to the class-I aminoacyl-tRNA synthetase family. As to quaternary structure, monomer. The cofactor is Zn(2+).

The protein resides in the cytoplasm. The enzyme catalyses tRNA(Cys) + L-cysteine + ATP = L-cysteinyl-tRNA(Cys) + AMP + diphosphate. The sequence is that of Cysteine--tRNA ligase (cysS) from Mycobacterium bovis (strain ATCC BAA-935 / AF2122/97).